A 449-amino-acid polypeptide reads, in one-letter code: UDP-N-acetylmuramoylalanine--D-glutamate ligase (449 aa).

Residue 118-124 participates in ATP binding; that stretch reads GSNGKTT.

It belongs to the MurCDEF family.

Its subcellular location is the cytoplasm. It catalyses the reaction UDP-N-acetyl-alpha-D-muramoyl-L-alanine + D-glutamate + ATP = UDP-N-acetyl-alpha-D-muramoyl-L-alanyl-D-glutamate + ADP + phosphate + H(+). It participates in cell wall biogenesis; peptidoglycan biosynthesis. In terms of biological role, cell wall formation. Catalyzes the addition of glutamate to the nucleotide precursor UDP-N-acetylmuramoyl-L-alanine (UMA). In Oceanobacillus iheyensis (strain DSM 14371 / CIP 107618 / JCM 11309 / KCTC 3954 / HTE831), this protein is UDP-N-acetylmuramoylalanine--D-glutamate ligase.